The following is a 398-amino-acid chain: Dual-specificity RNA methyltransferase RlmN (398 aa).

Residue Glu119 is the Proton acceptor of the active site. In terms of domain architecture, Radical SAM core spans 125 to 364; that stretch reads EGDRATLCVS…TIVRKTRGDD (240 aa). A disulfide bridge links Cys132 with Cys369. [4Fe-4S] cluster contacts are provided by Cys139, Cys143, and Cys146. S-adenosyl-L-methionine-binding positions include 193–194, Ser225, 247–249, and Asn326; these read GE and SLH. Catalysis depends on Cys369, which acts as the S-methylcysteine intermediate.

The protein belongs to the radical SAM superfamily. RlmN family. Requires [4Fe-4S] cluster as cofactor.

The protein localises to the cytoplasm. It catalyses the reaction adenosine(2503) in 23S rRNA + 2 reduced [2Fe-2S]-[ferredoxin] + 2 S-adenosyl-L-methionine = 2-methyladenosine(2503) in 23S rRNA + 5'-deoxyadenosine + L-methionine + 2 oxidized [2Fe-2S]-[ferredoxin] + S-adenosyl-L-homocysteine. It carries out the reaction adenosine(37) in tRNA + 2 reduced [2Fe-2S]-[ferredoxin] + 2 S-adenosyl-L-methionine = 2-methyladenosine(37) in tRNA + 5'-deoxyadenosine + L-methionine + 2 oxidized [2Fe-2S]-[ferredoxin] + S-adenosyl-L-homocysteine. Specifically methylates position 2 of adenine 2503 in 23S rRNA and position 2 of adenine 37 in tRNAs. m2A2503 modification seems to play a crucial role in the proofreading step occurring at the peptidyl transferase center and thus would serve to optimize ribosomal fidelity. This is Dual-specificity RNA methyltransferase RlmN from Yersinia enterocolitica serotype O:8 / biotype 1B (strain NCTC 13174 / 8081).